Here is a 73-residue protein sequence, read N- to C-terminus: Biotin/lipoyl attachment protein (73 aa).

Positions 2 to 69 (TVSIQMAGNL…NEGDVLLELS (68 aa)) constitute a Biotinyl-binding domain. Lysine 35 bears the N6-biotinyllysine; alternate mark. Position 35 is an N6-lipoyllysine; alternate (lysine 35).

Post-translationally, can be both biotinylated and lipoylated on Lys-35 upon overexpression in E.coli depending on the growth medium; the nature of the modification in situ in B.subtilis is unknown.

The chain is Biotin/lipoyl attachment protein (yngHB) from Bacillus subtilis (strain 168).